Reading from the N-terminus, the 440-residue chain is Phenylacetate-coenzyme A ligase (440 aa).

The protein belongs to the phenylacetyl-CoA ligase family. In terms of assembly, monomer.

It carries out the reaction 2-phenylacetate + ATP + CoA = phenylacetyl-CoA + AMP + diphosphate. It functions in the pathway aromatic compound metabolism; phenylacetate degradation. Its activity is regulated as follows. Inhibition of activity is observed in the presence of a 1 mM of the divalent cations zinc, copper, and nickel. In terms of biological role, catalyzes the activation of phenylacetic acid (PA) to phenylacetyl-CoA (PA-CoA). Involved in the phenylalanine metabolism. This chain is Phenylacetate-coenzyme A ligase (paaK), found in Aromatoleum evansii (Azoarcus evansii).